Consider the following 364-residue polypeptide: DNA polymerase IV (364 aa).

The 185-residue stretch at 14 to 198 (IIHIDMDAFF…LPIEKFHGVG (185 aa)) folds into the UmuC domain. 2 residues coordinate Mg(2+): aspartate 18 and aspartate 116. Glutamate 117 is a catalytic residue.

This sequence belongs to the DNA polymerase type-Y family. Monomer. The cofactor is Mg(2+).

The protein localises to the cytoplasm. The catalysed reaction is DNA(n) + a 2'-deoxyribonucleoside 5'-triphosphate = DNA(n+1) + diphosphate. Its function is as follows. Poorly processive, error-prone DNA polymerase involved in untargeted mutagenesis. Copies undamaged DNA at stalled replication forks, which arise in vivo from mismatched or misaligned primer ends. These misaligned primers can be extended by PolIV. Exhibits no 3'-5' exonuclease (proofreading) activity. May be involved in translesional synthesis, in conjunction with the beta clamp from PolIII. In Streptococcus pyogenes serotype M18 (strain MGAS8232), this protein is DNA polymerase IV.